We begin with the raw amino-acid sequence, 81 residues long: Probable antitoxin MazE2 (81 aa).

Forms a complex with cognate toxin MazF2.

In terms of biological role, antitoxin component of a type II toxin-antitoxin (TA) system. The chain is Probable antitoxin MazE2 (mazE2) from Mycobacterium tuberculosis (strain ATCC 25618 / H37Rv).